A 224-amino-acid chain; its full sequence is CASP-like protein 3A1 (224 aa).

Residues 1 to 59 (MMMNGQKLAPAAEVAVQLPESKVAADNISGTMSGPLVGASGGGTTAAMRPFGRKAEVMH) are Cytoplasmic-facing. The chain crosses the membrane as a helical span at residues 60–80 (VLLRLLCIITSVAALSFMFTA). Residues 81–106 (QQSSTISIYGFMLPVQSKWSFSHSFE) are Extracellular-facing. A helical transmembrane segment spans residues 107–127 (YLVGVSAAVAAHSLLQLLISM). Residues 128-142 (SRLLRKSPVIPSRSH) are Cytoplasmic-facing. The chain crosses the membrane as a helical span at residues 143 to 163 (AWLIFAGDQVFAYAMISAGAA). At 164–192 (ASGVTNLNRTGIQHTALPNFCKPLQSFCD) the chain is on the extracellular side. Asn171 is a glycosylation site (N-linked (GlcNAc...) asparagine). Residues 193–213 (HVAVSIFFTFTSCFLLAASAV) form a helical membrane-spanning segment. Over 214–224 (QEVIWLSRSKY) the chain is Cytoplasmic.

Belongs to the Casparian strip membrane proteins (CASP) family. As to quaternary structure, homodimer and heterodimers.

Its subcellular location is the cell membrane. This chain is CASP-like protein 3A1, found in Populus trichocarpa (Western balsam poplar).